Consider the following 292-residue polypeptide: MTHQDQLHRYLFEDYAVRGELVSLQETYRQVLGQHNYPPAVKTLLGELLVATSLLTATLKFTSEITVQLQGDGPLRLAVINGDDRQNMRGLACINGDIADDATLAQMVGNGYLVITLTPAEGERYQGVVGLEGPRLADCLENYFLQSEQLPTRLFIRTGEYQGEVAAAGLLLQVLPGQDAHADDFDHLAQLTATVKGDELFALPANDVLYRLYHQDNVTVYPAQSVQFLCTCSRQRCADALMTLGEQELHDMLEQDGEVDMHCDFCGSHYRFDADAIADLQQQAAQGYSPQA.

Intrachain disulfides connect C230–C232 and C263–C266.

It belongs to the HSP33 family. Under oxidizing conditions two disulfide bonds are formed involving the reactive cysteines. Under reducing conditions zinc is bound to the reactive cysteines and the protein is inactive.

The protein localises to the cytoplasm. In terms of biological role, redox regulated molecular chaperone. Protects both thermally unfolding and oxidatively damaged proteins from irreversible aggregation. Plays an important role in the bacterial defense system toward oxidative stress. The protein is 33 kDa chaperonin of Sodalis glossinidius (strain morsitans).